Reading from the N-terminus, the 168-residue chain is MSKRKWRGFRGAQQERAQPPAASPQPCPAPHAGLPGGSRRRAPAPAGQQQMRAESRSGAQRRRGSARRGAHREAGGCVRGRTRSSGSERSNALWQAVDAAEALALSSPLRRPWDQAQHFTNPAPFSKGPQSAPPSPPAGRRRRGADLALTPLAGEGHTRWRQPGRPGK.

Disordered stretches follow at residues 1–91 (MSKR…ERSN) and 108–168 (PLRR…RPGK). Composition is skewed to basic residues over residues 59–70 (AQRRRGSARRGA) and 159–168 (RWRQPGRPGK).

This chain is Putative insulin-like growth factor 2 antisense gene protein (IGF2-AS), found in Homo sapiens (Human).